Consider the following 86-residue polypeptide: Omega-theraphotoxin-Hhn1f 2 (86 aa).

Residues 1-21 (MKSIVFVALFGLALLAVVCSA) form the signal peptide. The propeptide occupies 22–50 (SEDAHKELLKEVVRAVVVDKTDAVQAEER). Disulfide bonds link Cys52–Cys66, Cys59–Cys71, and Cys65–Cys78.

Belongs to the neurotoxin 10 (Hwtx-1) family. 17 (Hntx-9) subfamily. Expressed by the venom gland.

The protein resides in the secreted. Its function is as follows. Ion channel inhibitor. This chain is Omega-theraphotoxin-Hhn1f 2, found in Cyriopagopus hainanus (Chinese bird spider).